Consider the following 547-residue polypeptide: Chaperonin GroEL (547 aa).

ATP-binding positions include 30–33 (TLGP), K51, 87–91 (DGTTT), G415, and D496. Positions 528–547 (KGGGAPAGGGMPGGMGDMDF) are disordered.

This sequence belongs to the chaperonin (HSP60) family. In terms of assembly, forms a cylinder of 14 subunits composed of two heptameric rings stacked back-to-back. Interacts with the co-chaperonin GroES.

It is found in the cytoplasm. The catalysed reaction is ATP + H2O + a folded polypeptide = ADP + phosphate + an unfolded polypeptide.. Together with its co-chaperonin GroES, plays an essential role in assisting protein folding. The GroEL-GroES system forms a nano-cage that allows encapsulation of the non-native substrate proteins and provides a physical environment optimized to promote and accelerate protein folding. This Caulobacter vibrioides (strain ATCC 19089 / CIP 103742 / CB 15) (Caulobacter crescentus) protein is Chaperonin GroEL.